The following is a 103-amino-acid chain: Histone H4 (103 aa).

Residues 1–14 (MSGRGKGGKGLGKG) are compositionally biased toward gly residues. The tract at residues 1–20 (MSGRGKGGKGLGKGGAKRHR) is disordered. The DNA-binding element occupies 17–21 (KRHRK).

It belongs to the histone H4 family. The nucleosome is a histone octamer containing two molecules each of H2A, H2B, H3 and H4 assembled in one H3-H4 heterotetramer and two H2A-H2B heterodimers. The octamer wraps approximately 147 bp of DNA.

It is found in the nucleus. It localises to the chromosome. In terms of biological role, core component of nucleosome. Nucleosomes wrap and compact DNA into chromatin, limiting DNA accessibility to the cellular machineries which require DNA as a template. Histones thereby play a central role in transcription regulation, DNA repair, DNA replication and chromosomal stability. DNA accessibility is regulated via a complex set of post-translational modifications of histones, also called histone code, and nucleosome remodeling. This is Histone H4 (H4-I) from Volvox carteri (Green alga).